The following is a 727-amino-acid chain: Elongation factor 2 (727 aa).

The tr-type G domain maps to 19–260 (EQIRNMGICA…MSIKHLPNPL (242 aa)). GTP-binding positions include 28-35 (AHIDHGKT), 94-98 (DTPGH), and 148-151 (NKVD). A Diphthamide modification is found at H603.

The protein belongs to the TRAFAC class translation factor GTPase superfamily. Classic translation factor GTPase family. EF-G/EF-2 subfamily.

It localises to the cytoplasm. Its function is as follows. Catalyzes the GTP-dependent ribosomal translocation step during translation elongation. During this step, the ribosome changes from the pre-translocational (PRE) to the post-translocational (POST) state as the newly formed A-site-bound peptidyl-tRNA and P-site-bound deacylated tRNA move to the P and E sites, respectively. Catalyzes the coordinated movement of the two tRNA molecules, the mRNA and conformational changes in the ribosome. The sequence is that of Elongation factor 2 from Methanococcus maripaludis (strain DSM 14266 / JCM 13030 / NBRC 101832 / S2 / LL).